The sequence spans 55 residues: Trypsin inhibitor ClTI-1 (55 aa).

The 55-residue stretch at Ser-1 to Cys-55 folds into the Kazal-like domain. 3 cysteine pairs are disulfide-bonded: Cys-6–Cys-37, Cys-15–Cys-34, and Cys-23–Cys-55.

Its subcellular location is the secreted. Functionally, inhibits trypsin and plasmin. The sequence is that of Trypsin inhibitor ClTI-1 from Gallus gallus (Chicken).